Reading from the N-terminus, the 262-residue chain is 4-hydroxy-2-oxo-heptane-1,7-dioate aldolase (262 aa).

The active-site Proton acceptor is His45. Gln147 provides a ligand contact to substrate. An a divalent metal cation-binding site is contributed by Glu149. Substrate is bound by residues Ala174 and Asp175. Asp175 contributes to the a divalent metal cation binding site.

It belongs to the HpcH/HpaI aldolase family. Homohexamer; trimer of dimers. It depends on a divalent metal cation as a cofactor.

It catalyses the reaction 4-hydroxy-2-oxoheptanedioate = succinate semialdehyde + pyruvate. Its pathway is aromatic compound metabolism; 4-hydroxyphenylacetate degradation; pyruvate and succinate semialdehyde from 4-hydroxyphenylacetate: step 7/7. Functionally, catalyzes the reversible retro-aldol cleavage of 4-hydroxy-2-ketoheptane-1,7-dioate (HKHD) to pyruvate and succinic semialdehyde. This is 4-hydroxy-2-oxo-heptane-1,7-dioate aldolase from Shigella boydii serotype 4 (strain Sb227).